A 286-amino-acid chain; its full sequence is Aldo-keto reductase MAP_4149 (286 aa).

Catalysis depends on Tyr-61, which acts as the Proton donor. Positions 201, 203, 239, 241, 242, 247, and 251 each coordinate NADPH.

Belongs to the aldo/keto reductase family.

This chain is Aldo-keto reductase MAP_4149, found in Mycolicibacterium paratuberculosis (strain ATCC BAA-968 / K-10) (Mycobacterium paratuberculosis).